The primary structure comprises 154 residues: Superoxide dismutase [Cu-Zn] (154 aa).

K19 is covalently cross-linked (Glycyl lysine isopeptide (Lys-Gly) (interchain with G-Cter in SUMO)). Phosphoserine is present on residues S26 and S39. E43 serves as a coordination point for Zn(2+). Cu cation is bound by residues H47, H49, and H64. Residues C58 and C147 are joined by a disulfide bond. Zn(2+) is bound at residue H64. A Glycyl lysine isopeptide (Lys-Gly) (interchain with G-Cter in SUMO) cross-link involves residue K70. Residues H72, H81, and D84 each contribute to the Zn(2+) site. Phosphoserine is present on residues S99 and S117. Residue H121 coordinates Cu cation. T132 and T138 each carry phosphothreonine. R144 is a binding site for substrate.

The protein belongs to the Cu-Zn superoxide dismutase family. In terms of assembly, homodimer in holo form. In apo form, heterodimer with CCS1. Zinc-binding at 'His-16' of CCS1 and Glu-43 of apo-SOD1 is required for this heterodimerization. The cofactor is Cu cation. Zn(2+) is required as a cofactor.

Its subcellular location is the cytoplasm. It localises to the mitochondrion intermembrane space. It carries out the reaction 2 superoxide + 2 H(+) = H2O2 + O2. Destroys radicals which are normally produced within the cells and which are toxic to biological systems. In Saccharomyces cerevisiae (strain ATCC 204508 / S288c) (Baker's yeast), this protein is Superoxide dismutase [Cu-Zn].